The following is a 348-amino-acid chain: Eukaryotic translation initiation factor 3 subunit I (348 aa).

WD repeat units lie at residues 8-49 (GHER…GTFE), 51-91 (HMGT…YTYE), 93-135 (PTPV…PKNQ), 147-186 (DGAKKVTIAGWSAGGKYIIAGHEDGLVSKYDGATGEFIDS), 196-238 (EKIH…KVYK), and 294-333 (GHFGPLNTIAVHPDGTGYASGGEDGFIRLHSFDKSYYDFE).

It belongs to the eIF-3 subunit I family. In terms of assembly, component of the eukaryotic translation initiation factor 3 (eIF-3) complex.

It localises to the cytoplasm. Its function is as follows. Component of the eukaryotic translation initiation factor 3 (eIF-3) complex, which is involved in protein synthesis of a specialized repertoire of mRNAs and, together with other initiation factors, stimulates binding of mRNA and methionyl-tRNAi to the 40S ribosome. The eIF-3 complex specifically targets and initiates translation of a subset of mRNAs involved in cell proliferation. The chain is Eukaryotic translation initiation factor 3 subunit I from Meyerozyma guilliermondii (strain ATCC 6260 / CBS 566 / DSM 6381 / JCM 1539 / NBRC 10279 / NRRL Y-324) (Yeast).